Here is a 176-residue protein sequence, read N- to C-terminus: MTVERVVSIPSGVSVTMDGTVLHVKGPKGNLQRDMWYPGIEITIGSEDVRFTTESQKKAVTSMVGTLASHCSNMCTGVTKGYLYSMKVVYSHFPIQIKVVGETLEIVNFLGEKYPRSARILPGTTVKVGSDEVTVTGIDKEVVGSTAANIERATRIRDRDPRVFQDGIYIVSRSEQ.

The protein belongs to the universal ribosomal protein uL6 family. In terms of assembly, part of the 50S ribosomal subunit.

Its function is as follows. This protein binds to the 23S rRNA, and is important in its secondary structure. It is located near the subunit interface in the base of the L7/L12 stalk, and near the tRNA binding site of the peptidyltransferase center. In Methanospirillum hungatei JF-1 (strain ATCC 27890 / DSM 864 / NBRC 100397 / JF-1), this protein is Large ribosomal subunit protein uL6.